Reading from the N-terminus, the 72-residue chain is Hirudin variant-2 (72 aa).

The signal sequence occupies residues 1 to 7; the sequence is AICVSQA. Residues 8-10 form an interaction with thrombin active site region; the sequence is ITY. Cystine bridges form between Cys13-Cys21, Cys23-Cys35, and Cys29-Cys46. The tract at residues 47-72 is disordered; it reads VTGEGTPNPESHNNGDFEEIPEEYLQ. Thr52 is a glycosylation site (O-linked (GalNAc...) threonine). Positions 62–72 are interaction with fibrinogen-binding exosite of thrombin; that stretch reads DFEEIPEEYLQ. Positions 62–72 are enriched in acidic residues; it reads DFEEIPEEYLQ. Tyr70 carries the sulfotyrosine modification.

The protein belongs to the protease inhibitor I14 (hirudin) family.

The protein resides in the secreted. Functionally, hirudin is a potent thrombin-specific protease inhibitor. It forms a stable non-covalent complex with alpha-thrombin, thereby abolishing its ability to cleave fibrinogen. This Hirudo medicinalis (Medicinal leech) protein is Hirudin variant-2.